A 351-amino-acid polypeptide reads, in one-letter code: MLFKKIRGLFSNDLSIDLGTANTLIYVKGQGIVLDEPSVVAIRQERSGALKSIAAVGRDAKLMLGRTPKSIAAIRPMKDGVIADFFVTEKMLQYFIKQVHSSNFMRPSPRVLVCVPAGATQVERRAIKESAIGAGAREVYLIEEPMAAAIGAKLPVSTATGSMVIDIGGGTTEVAVISLNGIVYSSSVRIGGDRFDEAIISYVRKTFGSIIGEPTAERIKQEIGSAFIQEGDEVREIEVHGHNLAEGAPRSFKLTSRDVLEAIQAPLNGIVAAVRTALEECQPEHAADIFERGMVLTGGGALIRNIDVLLSKETGVPVIIADDPLTCVARGGGEALEMIDMHGGDIFSDDI.

Residues 20–22 (TAN), 169–171 (GGT), 217–220 (ERIK), and 299–302 (GGAL) each bind ATP.

It belongs to the FtsA/MreB family. In terms of assembly, forms polymers.

The protein resides in the cytoplasm. In terms of biological role, forms membrane-associated dynamic filaments that are essential for cell shape determination. Acts by regulating cell wall synthesis and cell elongation, and thus cell shape. A feedback loop between cell geometry and MreB localization may maintain elongated cell shape by targeting cell wall growth to regions of negative cell wall curvature. The chain is Cell shape-determining protein MreB from Pasteurella multocida (strain Pm70).